The chain runs to 183 residues: Cell division protein ZapC (183 aa).

Belongs to the ZapC family. In terms of assembly, interacts directly with FtsZ.

The protein localises to the cytoplasm. In terms of biological role, contributes to the efficiency of the cell division process by stabilizing the polymeric form of the cell division protein FtsZ. Acts by promoting interactions between FtsZ protofilaments and suppressing the GTPase activity of FtsZ. The chain is Cell division protein ZapC from Proteus mirabilis (strain HI4320).